We begin with the raw amino-acid sequence, 210 residues long: Shikimate kinase (210 aa).

An ATP-binding site is contributed by 34–39; the sequence is GAGKSV. Serine 38 is a Mg(2+) binding site. Residues aspartate 56, arginine 80, and glycine 102 each contribute to the substrate site. Arginine 140 lines the ATP pocket. Residue arginine 159 coordinates substrate.

It belongs to the shikimate kinase family. In terms of assembly, monomer. Mg(2+) is required as a cofactor.

It is found in the cytoplasm. The enzyme catalyses shikimate + ATP = 3-phosphoshikimate + ADP + H(+). Its pathway is metabolic intermediate biosynthesis; chorismate biosynthesis; chorismate from D-erythrose 4-phosphate and phosphoenolpyruvate: step 5/7. In terms of biological role, catalyzes the specific phosphorylation of the 3-hydroxyl group of shikimic acid using ATP as a cosubstrate. The polypeptide is Shikimate kinase (Bartonella quintana (strain Toulouse) (Rochalimaea quintana)).